A 460-amino-acid chain; its full sequence is uncharacterized protein (460 aa).

Residues 9-67 (NFKKNDIFEAEVLDLTHEGQGVVKIDSFPFFVDNALPGERIKMHVLKVGKSFGFGRVDE) form the TRAM domain. 4 residues coordinate S-adenosyl-L-methionine: glutamine 292, tyrosine 321, glutamate 342, and aspartate 390. Residue cysteine 417 is the Nucleophile of the active site.

Belongs to the class I-like SAM-binding methyltransferase superfamily. RNA M5U methyltransferase family.

This is an uncharacterized protein from Lactococcus lactis subsp. lactis (strain IL1403) (Streptococcus lactis).